Reading from the N-terminus, the 263-residue chain is Regulatory protein RecX (263 aa).

Belongs to the RecX family.

The protein resides in the cytoplasm. In terms of biological role, modulates RecA activity. The chain is Regulatory protein RecX from Bacillus velezensis (strain DSM 23117 / BGSC 10A6 / LMG 26770 / FZB42) (Bacillus amyloliquefaciens subsp. plantarum).